Consider the following 167-residue polypeptide: Protein FAM163B (167 aa).

The chain crosses the membrane as a helical span at residues 6–26 (VVITGGILATVILLCIIAVLC). At Ser40 the chain carries Phosphoserine.

Belongs to the FAM163 family.

It is found in the membrane. This chain is Protein FAM163B (Fam163b), found in Mus musculus (Mouse).